An 88-amino-acid chain; its full sequence is Small ribosomal subunit protein bS20 (88 aa).

This sequence belongs to the bacterial ribosomal protein bS20 family.

Its function is as follows. Binds directly to 16S ribosomal RNA. In Clostridium acetobutylicum (strain ATCC 824 / DSM 792 / JCM 1419 / IAM 19013 / LMG 5710 / NBRC 13948 / NRRL B-527 / VKM B-1787 / 2291 / W), this protein is Small ribosomal subunit protein bS20.